Here is a 258-residue protein sequence, read N- to C-terminus: MDVFVDGELESLLGMFNFDQCSSSKEERPRDELLGLSSLYNGHLHQHQHHNNVLSSDHHAFLLPDMFPFGAMPGGNLPAMLDSWDQSHHLQETSSLKRKLLDVENLCKTNSNCDVTRQELAKSKKKQRVSSESNTVDESNTNWVDGQSLSNSSDDEKASVTSVKGKTRATKGTATDPQSLYARKRREKINERLKTLQNLVPNGTKVDISTMLEEAVHYVKFLQLQIKLLSSDDLWMYAPLAYNGLDMGFHHNLLSRLM.

The D-box signature appears at 98–105; it reads RKLLDVEN. The segment at 119–178 is disordered; sequence ELAKSKKKQRVSSESNTVDESNTNWVDGQSLSNSSDDEKASVTSVKGKTRATKGTATDPQ. The span at 130-152 shows a compositional bias: polar residues; it reads SSESNTVDESNTNWVDGQSLSNS. The tract at residues 173–186 is basic motif; sequence TATDPQSLYARKRR. Positions 173–222 constitute a bHLH domain; the sequence is TATDPQSLYARKRREKINERLKTLQNLVPNGTKVDISTMLEEAVHYVKFL. Positions 187 to 222 are helix-loop-helix motif; sequence EKINERLKTLQNLVPNGTKVDISTMLEEAVHYVKFL.

Homodimer. In terms of processing, ubiquitinated. Ubiquitination leads to its subsequent degradation by the 26S proteasome. Expressed constitutively in roots, leaves, and flowers. Expressed in root epidermal hair cells.

The protein localises to the nucleus. In terms of biological role, transcription factor involved in the regulation of root hair elongation. Is sufficient to promote postmitotic cell growth in root-hair cells and is a direct transcriptional target of RHD6 and RSL1. Involved in the regulation of root hair elongation in response to low phosphate. Controls root hair cell growth by regulating the expression of genes encoding proteins involved in cell signaling, cell wall modification and secretion. The chain is Transcription factor RSL3 from Arabidopsis thaliana (Mouse-ear cress).